The primary structure comprises 29 residues: RICPRILMECKADSDCLAQCICEESGFCG.

Intrachain disulfides connect Cys-3-Cys-20, Cys-10-Cys-22, and Cys-16-Cys-28.

This sequence belongs to the protease inhibitor I7 (squash-type serine protease inhibitor) family.

It localises to the secreted. Strongly inhibits trypsin, weakly inhibits chymotrypsin. This chain is Trypsin inhibitor 3, found in Cyclanthera pedata (Achocha).